The chain runs to 442 residues: Probable glycine dehydrogenase (decarboxylating) subunit 1 (442 aa).

This sequence belongs to the GcvP family. N-terminal subunit subfamily. As to quaternary structure, the glycine cleavage system is composed of four proteins: P, T, L and H. In this organism, the P 'protein' is a heterodimer of two subunits.

The enzyme catalyses N(6)-[(R)-lipoyl]-L-lysyl-[glycine-cleavage complex H protein] + glycine + H(+) = N(6)-[(R)-S(8)-aminomethyldihydrolipoyl]-L-lysyl-[glycine-cleavage complex H protein] + CO2. Functionally, the glycine cleavage system catalyzes the degradation of glycine. The P protein binds the alpha-amino group of glycine through its pyridoxal phosphate cofactor; CO(2) is released and the remaining methylamine moiety is then transferred to the lipoamide cofactor of the H protein. This Geotalea daltonii (strain DSM 22248 / JCM 15807 / FRC-32) (Geobacter daltonii) protein is Probable glycine dehydrogenase (decarboxylating) subunit 1.